The following is a 91-amino-acid chain: Gas vesicle protein K (91 aa).

It belongs to the gas vesicle GvpK family.

Its subcellular location is the gas vesicle. In terms of biological role, might be involved in nucleating gas vesicle formation. Gas vesicles are hollow, gas filled proteinaceous nanostructures found in some microorganisms. It is not clear what function gas vesicles perform in soil bacteria. The chain is Gas vesicle protein K from Streptomyces sp. (strain CB03234).